We begin with the raw amino-acid sequence, 105 residues long: UPF0145 protein HD_1349 (105 aa).

The protein belongs to the UPF0145 family.

The polypeptide is UPF0145 protein HD_1349 (Haemophilus ducreyi (strain 35000HP / ATCC 700724)).